Here is a 159-residue protein sequence, read N- to C-terminus: AQEEEAEQNLSELSGPWRTVYIGSTNPEKIQENGPFRTYFRELVFDDEKGTVDFYFSVKRDGKWKNVHVKATKQDDGTYVADYEGQNVFKIVSLSRTHLVAHNINVDKHGQTTELTELFVKLNVEDEDLEKFWKLTEDKGIDKKNVVNFLENEDHPHPE.

The protein belongs to the calycin superfamily. Lipocalin family. As to quaternary structure, homodimer.

It is found in the secreted. Its function is as follows. This protein binds a wide variety of chemical odorants. In Bos taurus (Bovine), this protein is Odorant-binding protein.